A 162-amino-acid chain; its full sequence is Selenoprotein F (162 aa).

A signal peptide spans Met1–Ala28. Residue Sec93 is a non-standard amino acid, selenocysteine.

The protein belongs to the selenoprotein M/F family. Forms a tight complex with UGGT1/UGCGL1. Interacts with UGGT2/UGCGL2. Interacts with RDH11.

It localises to the endoplasmic reticulum lumen. May be involved in redox reactions associated with the formation of disulfide bonds. May contribute to the quality control of protein folding in the endoplasmic reticulum. May regulate protein folding by enhancing the catalytic activity of UGGT1/UGCGL1 and UGGT2/UGCGL2. The sequence is that of Selenoprotein F from Mus musculus (Mouse).